Consider the following 228-residue polypeptide: 5'-methylthioadenosine/S-adenosylhomocysteine nucleosidase (228 aa).

Residue glutamate 11 is the Proton acceptor of the active site. Residues glycine 77, isoleucine 151, and 172 to 173 (ME) contribute to the substrate site. Aspartate 196 serves as the catalytic Proton donor.

This sequence belongs to the PNP/UDP phosphorylase family. MtnN subfamily.

It catalyses the reaction S-adenosyl-L-homocysteine + H2O = S-(5-deoxy-D-ribos-5-yl)-L-homocysteine + adenine. It carries out the reaction S-methyl-5'-thioadenosine + H2O = 5-(methylsulfanyl)-D-ribose + adenine. The catalysed reaction is 5'-deoxyadenosine + H2O = 5-deoxy-D-ribose + adenine. It participates in amino-acid biosynthesis; L-methionine biosynthesis via salvage pathway; S-methyl-5-thio-alpha-D-ribose 1-phosphate from S-methyl-5'-thioadenosine (hydrolase route): step 1/2. Its function is as follows. Catalyzes the irreversible cleavage of the glycosidic bond in both 5'-methylthioadenosine (MTA) and S-adenosylhomocysteine (SAH/AdoHcy) to adenine and the corresponding thioribose, 5'-methylthioribose and S-ribosylhomocysteine, respectively. Also cleaves 5'-deoxyadenosine, a toxic by-product of radical S-adenosylmethionine (SAM) enzymes, into 5-deoxyribose and adenine. The sequence is that of 5'-methylthioadenosine/S-adenosylhomocysteine nucleosidase from Staphylococcus carnosus (strain TM300).